A 550-amino-acid polypeptide reads, in one-letter code: Glucose-6-phosphate isomerase (550 aa).

D-glucose 6-phosphate-binding positions include 164-165, 215-220, glutamine 359, glutamate 363, and histidine 394; these read GS and SKTFTT. Glutamate 363 acts as the Proton donor in catalysis. Histidine 394 is an active-site residue. At threonine 455 the chain carries Phosphothreonine. Residue lysine 516 participates in D-glucose 6-phosphate binding. Residue lysine 516 is part of the active site.

The protein belongs to the GPI family. As to quaternary structure, homodimer.

The protein resides in the cytoplasm. It is found in the cytosol. It catalyses the reaction alpha-D-glucose 6-phosphate = beta-D-fructose 6-phosphate. Its pathway is carbohydrate degradation; glycolysis; D-glyceraldehyde 3-phosphate and glycerone phosphate from D-glucose: step 2/4. Functionally, in the cytoplasm, catalyzes the conversion of glucose-6-phosphate to fructose-6-phosphate, the second step in glycolysis, and the reverse reaction during gluconeogenesis. The chain is Glucose-6-phosphate isomerase (pgi1) from Schizosaccharomyces pombe (strain 972 / ATCC 24843) (Fission yeast).